A 261-amino-acid chain; its full sequence is Cytochrome c oxidase subunit 3 (261 aa).

Over 1–15 the chain is Mitochondrial matrix; sequence MAHQAHAYHMVDPSP. Residues 16-34 traverse the membrane as a helical segment; sequence WPITGATAALLVTSGLAAW. Topologically, residues 35 to 40 are mitochondrial intermembrane; it reads FHFNSM. The chain crosses the membrane as a helical span at residues 41–66; it reads ILILMGLTLLLLTMYQWWRDIIREST. The Mitochondrial matrix portion of the chain corresponds to 67–72; the sequence is FQGHHT. A helical transmembrane segment spans residues 73–105; it reads LPVQKSLRYGMILFITSEVFFFLGFFWAFYHSS. The Mitochondrial intermembrane portion of the chain corresponds to 106–128; it reads LAPTPELGGLWPPTGITPLDPFE. Residues 129 to 152 form a helical membrane-spanning segment; it reads VPLLNTAVLLASGITVTWAHHSLM. Over 153–155 the chain is Mitochondrial matrix; sequence EGQ. The helical transmembrane segment at 156–183 threads the bilayer; it reads RKEAIQSLFITVLLGLYFTALQATEYYE. At 184–190 the chain is on the mitochondrial intermembrane side; the sequence is SPFTIAD. A helical membrane pass occupies residues 191–223; it reads GAYGSTFFVATGFHGLHVIIGSTFLIVCLVRQT. The Mitochondrial matrix portion of the chain corresponds to 224–232; it reads QYHFTSNHH. A helical transmembrane segment spans residues 233–256; it reads FGFEAAAWYWHFVDVVWLFLYVSI. Over 257–261 the chain is Mitochondrial intermembrane; the sequence is YWWGS.

The protein belongs to the cytochrome c oxidase subunit 3 family. As to quaternary structure, component of the cytochrome c oxidase (complex IV, CIV), a multisubunit enzyme composed of 14 subunits. The complex is composed of a catalytic core of 3 subunits MT-CO1, MT-CO2 and MT-CO3, encoded in the mitochondrial DNA, and 11 supernumerary subunits COX4I, COX5A, COX5B, COX6A, COX6B, COX6C, COX7A, COX7B, COX7C, COX8 and NDUFA4, which are encoded in the nuclear genome. The complex exists as a monomer or a dimer and forms supercomplexes (SCs) in the inner mitochondrial membrane with NADH-ubiquinone oxidoreductase (complex I, CI) and ubiquinol-cytochrome c oxidoreductase (cytochrome b-c1 complex, complex III, CIII), resulting in different assemblies (supercomplex SCI(1)III(2)IV(1) and megacomplex MCI(2)III(2)IV(2)).

Its subcellular location is the mitochondrion inner membrane. The enzyme catalyses 4 Fe(II)-[cytochrome c] + O2 + 8 H(+)(in) = 4 Fe(III)-[cytochrome c] + 2 H2O + 4 H(+)(out). In terms of biological role, component of the cytochrome c oxidase, the last enzyme in the mitochondrial electron transport chain which drives oxidative phosphorylation. The respiratory chain contains 3 multisubunit complexes succinate dehydrogenase (complex II, CII), ubiquinol-cytochrome c oxidoreductase (cytochrome b-c1 complex, complex III, CIII) and cytochrome c oxidase (complex IV, CIV), that cooperate to transfer electrons derived from NADH and succinate to molecular oxygen, creating an electrochemical gradient over the inner membrane that drives transmembrane transport and the ATP synthase. Cytochrome c oxidase is the component of the respiratory chain that catalyzes the reduction of oxygen to water. Electrons originating from reduced cytochrome c in the intermembrane space (IMS) are transferred via the dinuclear copper A center (CU(A)) of subunit 2 and heme A of subunit 1 to the active site in subunit 1, a binuclear center (BNC) formed by heme A3 and copper B (CU(B)). The BNC reduces molecular oxygen to 2 water molecules using 4 electrons from cytochrome c in the IMS and 4 protons from the mitochondrial matrix. This is Cytochrome c oxidase subunit 3 (MT-CO3) from Latimeria chalumnae (Coelacanth).